The chain runs to 389 residues: Arrestin-C (389 aa).

It belongs to the arrestin family. Retina and pineal gland.

Functionally, may play a role in an as yet undefined retina-specific signal transduction. Could bind to photoactivated-phosphorylated red/green opsins. In Lithobates pipiens (Northern leopard frog), this protein is Arrestin-C (arr3).